Here is a 294-residue protein sequence, read N- to C-terminus: Nucleotide-binding protein CLD_1131 (294 aa).

8-15 (GLSGAGKT) lines the ATP pocket. 59 to 62 (DIRG) is a GTP binding site.

This sequence belongs to the RapZ-like family.

Displays ATPase and GTPase activities. The polypeptide is Nucleotide-binding protein CLD_1131 (Clostridium botulinum (strain Okra / Type B1)).